We begin with the raw amino-acid sequence, 153 residues long: Gastric inhibitory polypeptide (153 aa).

The signal sequence occupies residues 1 to 21 (MVATKTFALLLLSLFLAVGLG). Propeptides lie at residues 22–50 (EKKE…PRGP) and 95–153 (EARA…LRSR). The segment at 102–125 (ASQANRKEEEAVEPQSSPAKNPSD) is disordered.

This sequence belongs to the glucagon family.

It is found in the secreted. Functionally, potent stimulator of insulin secretion and relatively poor inhibitor of gastric acid secretion. This chain is Gastric inhibitory polypeptide (GIP), found in Homo sapiens (Human).